Reading from the N-terminus, the 890-residue chain is ATP-dependent DNA helicase DDX11 (890 aa).

In terms of domain architecture, Helicase ATP-binding spans 4 to 424 (KSGRFPFPFQ…KNLMYIKQIL (421 aa)). 39-46 (SPTGTGKS) lines the ATP pocket. Positions 71–85 (LLEGQKDSDVVKEKN) are enriched in basic and acidic residues. 2 disordered regions span residues 71-95 (LLEGQKDSDVVKEKNSNSGPPEPDW) and 176-199 (EYESDDEATPKSRLCDDDNDDDDD). [4Fe-4S] cluster-binding residues include Cys246, Cys264, Cys294, and Cys329. Positions 372 to 375 (DEAH) match the DEAH box motif.

It belongs to the DEAD box helicase family. DEAH subfamily. DDX11/CHL1 sub-subfamily. Requires [4Fe-4S] cluster as cofactor.

The protein localises to the nucleus. Its subcellular location is the nucleolus. The protein resides in the cytoplasm. It localises to the cytoskeleton. It is found in the spindle pole. The protein localises to the midbody. Its subcellular location is the microtubule organizing center. The protein resides in the centrosome. It catalyses the reaction Couples ATP hydrolysis with the unwinding of duplex DNA at the replication fork by translocating in the 5'-3' direction. This creates two antiparallel DNA single strands (ssDNA). The leading ssDNA polymer is the template for DNA polymerase III holoenzyme which synthesizes a continuous strand.. It carries out the reaction ATP + H2O = ADP + phosphate + H(+). In terms of biological role, DNA-dependent ATPase and ATP-dependent DNA helicase that participates in various functions in genomic stability, including DNA replication, DNA repair and heterochromatin organization as well as in ribosomal RNA synthesis. Plays a role in DNA double-strand break (DSB) repair at the DNA replication fork during DNA replication recovery from DNA damage. Plays a role in the regulation of sister chromatid cohesion and mitotic chromosome segregation. Stimulates 5'-single-stranded DNA flap endonuclease activity of FEN1 in an ATP- and helicase-independent manner. Also plays a role in heterochromatin organization. Involved in rRNA transcription activation through binding to active hypomethylated rDNA gene loci by recruiting UBTF and the RNA polymerase Pol I transcriptional machinery. Plays a role in embryonic development. Associates with chromatin at DNA replication fork regions. Binds to single- and double-stranded DNAs. This chain is ATP-dependent DNA helicase DDX11, found in Danio rerio (Zebrafish).